The chain runs to 196 residues: Segregation and condensation protein B (196 aa).

The protein belongs to the ScpB family. In terms of assembly, homodimer. Homodimerization may be required to stabilize the binding of ScpA to the Smc head domains. Component of a cohesin-like complex composed of ScpA, ScpB and the Smc homodimer, in which ScpA and ScpB bind to the head domain of Smc. The presence of the three proteins is required for the association of the complex with DNA.

The protein resides in the cytoplasm. Participates in chromosomal partition during cell division. May act via the formation of a condensin-like complex containing Smc and ScpA that pull DNA away from mid-cell into both cell halves. This is Segregation and condensation protein B from Pediococcus pentosaceus (strain ATCC 25745 / CCUG 21536 / LMG 10740 / 183-1w).